We begin with the raw amino-acid sequence, 274 residues long: Dermonecrotic toxin SdSicTox-betaIIB1bi (274 aa).

The active site involves H5. Residues E25 and D27 each contribute to the Mg(2+) site. The active-site Nucleophile is H41. Cystine bridges form between C45-C51 and C47-C190. Residue D85 coordinates Mg(2+).

The protein belongs to the arthropod phospholipase D family. Class II subfamily. Requires Mg(2+) as cofactor. Expressed by the venom gland.

It is found in the secreted. The catalysed reaction is an N-(acyl)-sphingosylphosphocholine = an N-(acyl)-sphingosyl-1,3-cyclic phosphate + choline. It carries out the reaction an N-(acyl)-sphingosylphosphoethanolamine = an N-(acyl)-sphingosyl-1,3-cyclic phosphate + ethanolamine. It catalyses the reaction a 1-acyl-sn-glycero-3-phosphocholine = a 1-acyl-sn-glycero-2,3-cyclic phosphate + choline. The enzyme catalyses a 1-acyl-sn-glycero-3-phosphoethanolamine = a 1-acyl-sn-glycero-2,3-cyclic phosphate + ethanolamine. Dermonecrotic toxins cleave the phosphodiester linkage between the phosphate and headgroup of certain phospholipids (sphingolipid and lysolipid substrates), forming an alcohol (often choline) and a cyclic phosphate. This toxin acts on sphingomyelin (SM). It may also act on ceramide phosphoethanolamine (CPE), lysophosphatidylcholine (LPC) and lysophosphatidylethanolamine (LPE), but not on lysophosphatidylserine (LPS), and lysophosphatidylglycerol (LPG). It acts by transphosphatidylation, releasing exclusively cyclic phosphate products as second products. Induces dermonecrosis, hemolysis, increased vascular permeability, edema, inflammatory response, and platelet aggregation. In Sicarius cf. damarensis (strain GJB-2008) (Six-eyed sand spider), this protein is Dermonecrotic toxin SdSicTox-betaIIB1bi.